Here is a 158-residue protein sequence, read N- to C-terminus: pH 6 antigen (158 aa).

An N-terminal signal peptide occupies residues 1–26 (MKMKCFAKNALAVTTLMIAACGMANA).

As to quaternary structure, forms a homomer composed of subunits assembled in a large structure.

Its subcellular location is the fimbrium. Its function is as follows. Fibrillar structure, part of fimbriae, necessary for full virulence. The chain is pH 6 antigen (psaA) from Yersinia pestis.